A 334-amino-acid chain; its full sequence is ADP-L-glycero-D-manno-heptose-6-epimerase (334 aa).

Residues 11-12 (FI), 32-33 (DN), K39, K54, 77-81 (QGACS), and N94 contribute to the NADP(+) site. Residue Y141 is the Proton acceptor of the active site. K145 provides a ligand contact to NADP(+). Residue N171 participates in substrate binding. Residues V172 and K180 each coordinate NADP(+). The active-site Proton acceptor is the K180. Substrate-binding positions include R182, H189, 203–206 (FGSN), R216, and Y295.

Belongs to the NAD(P)-dependent epimerase/dehydratase family. HldD subfamily. As to quaternary structure, homopentamer. It depends on NADP(+) as a cofactor.

It carries out the reaction ADP-D-glycero-beta-D-manno-heptose = ADP-L-glycero-beta-D-manno-heptose. Its pathway is nucleotide-sugar biosynthesis; ADP-L-glycero-beta-D-manno-heptose biosynthesis; ADP-L-glycero-beta-D-manno-heptose from D-glycero-beta-D-manno-heptose 7-phosphate: step 4/4. The protein operates within bacterial outer membrane biogenesis; LOS core biosynthesis. In terms of biological role, catalyzes the interconversion between ADP-D-glycero-beta-D-manno-heptose and ADP-L-glycero-beta-D-manno-heptose via an epimerization at carbon 6 of the heptose. The chain is ADP-L-glycero-D-manno-heptose-6-epimerase from Neisseria gonorrhoeae.